The primary structure comprises 273 residues: Ribosomal RNA small subunit methyltransferase A (273 aa).

Positions 18, 20, 45, 66, 91, and 113 each coordinate S-adenosyl-L-methionine.

This sequence belongs to the class I-like SAM-binding methyltransferase superfamily. rRNA adenine N(6)-methyltransferase family. RsmA subfamily.

It is found in the cytoplasm. It catalyses the reaction adenosine(1518)/adenosine(1519) in 16S rRNA + 4 S-adenosyl-L-methionine = N(6)-dimethyladenosine(1518)/N(6)-dimethyladenosine(1519) in 16S rRNA + 4 S-adenosyl-L-homocysteine + 4 H(+). In terms of biological role, specifically dimethylates two adjacent adenosines (A1518 and A1519) in the loop of a conserved hairpin near the 3'-end of 16S rRNA in the 30S particle. May play a critical role in biogenesis of 30S subunits. This is Ribosomal RNA small subunit methyltransferase A from Escherichia coli O157:H7.